The sequence spans 132 residues: ATP synthase epsilon chain (132 aa).

This sequence belongs to the ATPase epsilon chain family. As to quaternary structure, F-type ATPases have 2 components, CF(1) - the catalytic core - and CF(0) - the membrane proton channel. CF(1) has five subunits: alpha(3), beta(3), gamma(1), delta(1), epsilon(1). CF(0) has three main subunits: a, b and c.

It localises to the cell inner membrane. Its function is as follows. Produces ATP from ADP in the presence of a proton gradient across the membrane. The polypeptide is ATP synthase epsilon chain (Parvibaculum lavamentivorans (strain DS-1 / DSM 13023 / NCIMB 13966)).